Here is a 172-residue protein sequence, read N- to C-terminus: uncharacterized protein (172 aa).

A PfpI endopeptidase domain is found at 3–171 (KKVAIILTNE…FNREIVNQLN (169 aa)).

This sequence belongs to the peptidase C56 family.

This is an uncharacterized protein from Staphylococcus saprophyticus subsp. saprophyticus (strain ATCC 15305 / DSM 20229 / NCIMB 8711 / NCTC 7292 / S-41).